A 1403-amino-acid polypeptide reads, in one-letter code: DNA-directed RNA polymerase subunit beta' (1403 aa).

Zn(2+)-binding residues include Cys-68, Cys-70, Cys-83, and Cys-86. Residues Asp-459, Asp-461, and Asp-463 each coordinate Mg(2+). Positions 814, 887, 894, and 897 each coordinate Zn(2+).

Belongs to the RNA polymerase beta' chain family. The RNAP catalytic core consists of 2 alpha, 1 beta, 1 beta' and 1 omega subunit. When a sigma factor is associated with the core the holoenzyme is formed, which can initiate transcription. Mg(2+) serves as cofactor. The cofactor is Zn(2+).

The enzyme catalyses RNA(n) + a ribonucleoside 5'-triphosphate = RNA(n+1) + diphosphate. In terms of biological role, DNA-dependent RNA polymerase catalyzes the transcription of DNA into RNA using the four ribonucleoside triphosphates as substrates. The protein is DNA-directed RNA polymerase subunit beta' of Solibacter usitatus (strain Ellin6076).